Consider the following 227-residue polypeptide: Hydroxylase/desaturase asaB (227 aa).

This sequence belongs to the asaB hydroxylase/desaturase family.

It functions in the pathway secondary metabolite biosynthesis. Hydroxylase/desaturase; part of the gene cluster that mediates the biosynthesis of aspergillic acid, a hydroxamic acid-containing pyrazinone with aliphatic side chains that originates from leucine (Leu) and isoleucine (Ile). Aspergillic acid has antibiotic properties and was shown to be lethal to mice. The first step in the pathway is the production of deoxyaspergillic acid via a condensation between the Ile amine and the Leu carboxylic acid, followed by a reductive release from the protein forming the dipeptide aldehyde NH(2)-Leu-Ile-CHO, which could undergo an intermolecular cyclization resulting in a dihydropyrazinone. As the NRPS asaC lacks a condensation domain, it is improbable that it is responsible for condensation of Leu and Ile. One possibility is that asaC acts on a previously condensed dipeptide and functions as a Leu-Ile reductase to yield deoxyaspergillic acid. After asaC forms deoxyaspergillic acid, the cytochrome P450 asaD oxidizes the pyrazinone to the hydroxamic acid-containing bioactive metabolite aspergillic acid. The hydroxylase/desaturase asaB can then convert aspergillic acid to hydroxyaspergillic acid. Both aspergillic acid and hydroxyaspergillic acid can form complexes with iron producing ferriaspergillin analogs. The chain is Hydroxylase/desaturase asaB from Aspergillus flavus (strain ATCC 200026 / FGSC A1120 / IAM 13836 / NRRL 3357 / JCM 12722 / SRRC 167).